A 305-amino-acid polypeptide reads, in one-letter code: Ribonuclease H (305 aa).

The catalysed reaction is Endonucleolytic cleavage to 5'-phosphomonoester.. Its function is as follows. Plays essential roles in DNA replication by removing the RNA primers from lagging strand fragments. Exhibits 5'to 3' exonuclease activity on either RNA/DNA or DNA/DNA duplexes and endonuclease activity on either flap or fork DNA structures. The chain is Ribonuclease H (rnh) from Enterobacteria phage T4 (Bacteriophage T4).